We begin with the raw amino-acid sequence, 34 residues long: MSDIN-like toxin proprotein 3 (34 aa).

A propeptide spanning residues 1-10 is cleaved from the precursor; it reads MSDINTARLP. The cyclopeptide (Phe-Pro) cross-link spans 11 to 20; the sequence is FFQPPEFRPP. The propeptide occupies 21 to 34; the sequence is CVGDDIEMVLTRGE.

The protein belongs to the MSDIN fungal toxin family. In terms of processing, processed by the macrocyclase-peptidase enzyme POPB to yield a toxic cyclic decapeptide. POPB first removes 10 residues from the N-terminus. Conformational trapping of the remaining peptide forces the enzyme to release this intermediate rather than proceed to macrocyclization. The enzyme rebinds the remaining peptide in a different conformation and catalyzes macrocyclization of the N-terminal 10 residues.

Functionally, probable toxin that belongs to the MSDIN-like toxin family responsible for a large number of food poisoning cases and deaths. In Amanita bisporigera (Destroying angel), this protein is MSDIN-like toxin proprotein 3.